A 177-amino-acid chain; its full sequence is Alkyl hydroperoxide reductase AhpD (177 aa).

Cys130 acts as the Proton donor in catalysis. An intrachain disulfide couples Cys130 to Cys133. Cys133 (cysteine sulfenic acid (-SOH) intermediate) is an active-site residue.

It belongs to the AhpD family. Homotrimer.

It catalyses the reaction N(6)-[(R)-dihydrolipoyl]-L-lysyl-[lipoyl-carrier protein] + a hydroperoxide = N(6)-[(R)-lipoyl]-L-lysyl-[lipoyl-carrier protein] + an alcohol + H2O. Antioxidant protein with alkyl hydroperoxidase activity. Required for the reduction of the AhpC active site cysteine residues and for the regeneration of the AhpC enzyme activity. This Corynebacterium aurimucosum (strain ATCC 700975 / DSM 44827 / CIP 107346 / CN-1) (Corynebacterium nigricans) protein is Alkyl hydroperoxide reductase AhpD.